The primary structure comprises 512 residues: 23S rRNA (uracil(1939)-C(5))-methyltransferase RlmD (512 aa).

The span at methionine 1–threonine 14 shows a compositional bias: low complexity. The interval methionine 1–alanine 45 is disordered. Positions glutamate 15–isoleucine 25 are enriched in polar residues. The span at serine 28–leucine 42 shows a compositional bias: basic residues. The TRAM domain maps to arginine 41–asparagine 113. [4Fe-4S] cluster-binding residues include cysteine 127, cysteine 133, cysteine 136, and cysteine 215. S-adenosyl-L-methionine is bound by residues glutamine 340, phenylalanine 369, asparagine 374, glutamate 393, aspartate 420, and aspartate 441. The active-site Nucleophile is the cysteine 467.

This sequence belongs to the class I-like SAM-binding methyltransferase superfamily. RNA M5U methyltransferase family. RlmD subfamily.

It catalyses the reaction uridine(1939) in 23S rRNA + S-adenosyl-L-methionine = 5-methyluridine(1939) in 23S rRNA + S-adenosyl-L-homocysteine + H(+). Its function is as follows. Catalyzes the formation of 5-methyl-uridine at position 1939 (m5U1939) in 23S rRNA. The sequence is that of 23S rRNA (uracil(1939)-C(5))-methyltransferase RlmD from Psychrobacter arcticus (strain DSM 17307 / VKM B-2377 / 273-4).